Consider the following 439-residue polypeptide: Omega-aminotransferase (439 aa).

Residue 112-113 (GS) coordinates pyridoxal 5'-phosphate. Residue lysine 281 is modified to N6-(pyridoxal phosphate)lysine. Threonine 318 contributes to the pyridoxal 5'-phosphate binding site.

It belongs to the class-III pyridoxal-phosphate-dependent aminotransferase family. Homotetramer. Pyridoxal 5'-phosphate serves as cofactor.

The enzyme catalyses 3-oxopropanoate + L-alanine = beta-alanine + pyruvate. It carries out the reaction 3-aminobutanoate + pyruvate = acetoacetate + L-alanine. It catalyses the reaction benzylamine + pyruvate = benzaldehyde + L-alanine. The catalysed reaction is (S)-1-phenylethylamine + pyruvate = acetophenone + L-alanine. The enzyme catalyses 2-phenylethylamine + pyruvate = 2-phenylacetaldehyde + L-alanine. It carries out the reaction 1-phenylpropylamine + pyruvate = 1-phenylpropan-1-one + L-alanine. It catalyses the reaction 3-phenylpropylamine + pyruvate = 3-phenylpropanal + L-alanine. Functionally, aminotransferase that can use beta-amino acids, aliphatic amines, or aromatic amines as amino donors, and pyruvate as amino acceptor. Shows high activity for short-chain beta-amino acids, with the highest activity for 3-aminobutanoate and beta-alanine in vitro. Displays higher activity toward aromatic amines than aliphatic amines. May be involved in beta-alanine biosynthesis and/or degradation. The chain is Omega-aminotransferase from Caulobacter vibrioides (strain ATCC 19089 / CIP 103742 / CB 15) (Caulobacter crescentus).